We begin with the raw amino-acid sequence, 92 residues long: Small ribosomal subunit protein bS20 (92 aa).

Residues 1 to 24 form a disordered region; it reads MANSAQARKRARQAAKANSHNSAL.

It belongs to the bacterial ribosomal protein bS20 family.

Functionally, binds directly to 16S ribosomal RNA. The polypeptide is Small ribosomal subunit protein bS20 (Paraburkholderia xenovorans (strain LB400)).